The primary structure comprises 413 residues: Phosphoribosylamine--glycine ligase (413 aa).

The ATP-grasp domain occupies 108 to 310 (KQLMDKYRIP…LMQLIIDLEN (203 aa)). 134–190 (VETCDLPIVIKKDGLAAGKGVIIAFTREDALDGVKKIYQEEKGKVVFESYLEGEEFS) provides a ligand contact to ATP. Positions 280 and 282 each coordinate Mg(2+).

Belongs to the GARS family. The cofactor is Mg(2+). Mn(2+) serves as cofactor.

The catalysed reaction is 5-phospho-beta-D-ribosylamine + glycine + ATP = N(1)-(5-phospho-beta-D-ribosyl)glycinamide + ADP + phosphate + H(+). It functions in the pathway purine metabolism; IMP biosynthesis via de novo pathway; N(1)-(5-phospho-D-ribosyl)glycinamide from 5-phospho-alpha-D-ribose 1-diphosphate: step 2/2. The chain is Phosphoribosylamine--glycine ligase from Staphylococcus epidermidis (strain ATCC 12228 / FDA PCI 1200).